Reading from the N-terminus, the 114-residue chain is UPF0342 protein LVIS_1488 (114 aa).

Belongs to the UPF0342 family.

The polypeptide is UPF0342 protein LVIS_1488 (Levilactobacillus brevis (strain ATCC 367 / BCRC 12310 / CIP 105137 / JCM 1170 / LMG 11437 / NCIMB 947 / NCTC 947) (Lactobacillus brevis)).